Reading from the N-terminus, the 397-residue chain is Succinate--CoA ligase [ADP-forming] subunit beta (397 aa).

An ATP-grasp domain is found at 9 to 254 (KALLKGYGAP…ETEEDAKEIE (246 aa)). Residues K46, 53-55 (GRG), E109, A112, and E117 contribute to the ATP site. N209 and D223 together coordinate Mg(2+). Substrate-binding positions include N274 and 331–333 (GIM).

It belongs to the succinate/malate CoA ligase beta subunit family. Heterotetramer of two alpha and two beta subunits. Mg(2+) serves as cofactor.

It catalyses the reaction succinate + ATP + CoA = succinyl-CoA + ADP + phosphate. The catalysed reaction is GTP + succinate + CoA = succinyl-CoA + GDP + phosphate. It functions in the pathway carbohydrate metabolism; tricarboxylic acid cycle; succinate from succinyl-CoA (ligase route): step 1/1. Functionally, succinyl-CoA synthetase functions in the citric acid cycle (TCA), coupling the hydrolysis of succinyl-CoA to the synthesis of either ATP or GTP and thus represents the only step of substrate-level phosphorylation in the TCA. The beta subunit provides nucleotide specificity of the enzyme and binds the substrate succinate, while the binding sites for coenzyme A and phosphate are found in the alpha subunit. The polypeptide is Succinate--CoA ligase [ADP-forming] subunit beta (Rhizobium etli (strain ATCC 51251 / DSM 11541 / JCM 21823 / NBRC 15573 / CFN 42)).